The chain runs to 193 residues: Alpha-S2-casein (193 aa).

The first 15 residues, 1-15 (MKFFIFTCLLAVVLA), serve as a signal peptide directing secretion. 10 positions are modified to phosphoserine: S23, S24, S25, S28, S47, S68, S123, S125, S128, and S136.

It belongs to the alpha-casein family. Mammary gland specific. Secreted in milk.

It is found in the secreted. In terms of biological role, important role in the capacity of milk to transport calcium phosphate. The sequence is that of Alpha-S2-casein (CSN1S2) from Camelus dromedarius (Dromedary).